The sequence spans 212 residues: Interleukin-6 (212 aa).

A signal peptide spans 1 to 29 (MNSFSTSAFGPVAFSLGLLLVLPAAFPAP). Cys72 and Cys78 are joined by a disulfide. Residue Asn73 is glycosylated (N-linked (GlcNAc...) asparagine). The residue at position 81 (Ser81) is a Phosphoserine; by FAM20C. A disulfide bridge connects residues Cys101 and Cys111.

It belongs to the IL-6 superfamily. Component of a hexamer of two molecules each of IL6, IL6R and IL6ST; first binds to IL6R to associate with the signaling subunit IL6ST. Interacts with IL6R (via the N-terminal ectodomain); this interaction may be affected by IL6R-binding with SORL1, hence decreasing IL6 cis signaling. Interacts with SORL1 (via the N-terminal ectodomain); this interaction leads to IL6 internalization and lysosomal degradation. May form a trimeric complex with the soluble SORL1 ectodomain and soluble IL6R receptor; this interaction might stabilize circulating IL6, hence promoting IL6 trans signaling. In terms of processing, N- and O-glycosylated. In terms of tissue distribution, produced by skeletal muscle.

It localises to the secreted. Cytokine with a wide variety of biological functions in immunity, tissue regeneration, and metabolism. Binds to IL6R, then the complex associates to the signaling subunit IL6ST/gp130 to trigger the intracellular IL6-signaling pathway. The interaction with the membrane-bound IL6R and IL6ST stimulates 'classic signaling', whereas the binding of IL6 and soluble IL6R to IL6ST stimulates 'trans-signaling'. Alternatively, 'cluster signaling' occurs when membrane-bound IL6:IL6R complexes on transmitter cells activate IL6ST receptors on neighboring receiver cells. Its function is as follows. IL6 is a potent inducer of the acute phase response. Rapid production of IL6 contributes to host defense during infection and tissue injury, but excessive IL6 synthesis is involved in disease pathology. In the innate immune response, is synthesized by myeloid cells, such as macrophages and dendritic cells, upon recognition of pathogens through toll-like receptors (TLRs) at the site of infection or tissue injury. In the adaptive immune response, is required for the differentiation of B cells into immunoglobulin-secreting cells. Plays a major role in the differentiation of CD4(+) T cell subsets. Essential factor for the development of T follicular helper (Tfh) cells that are required for the induction of germinal-center formation. Required to drive naive CD4(+) T cells to the Th17 lineage. Also required for proliferation of myeloma cells and the survival of plasmablast cells. In terms of biological role, acts as an essential factor in bone homeostasis and on vessels directly or indirectly by induction of VEGF, resulting in increased angiogenesis activity and vascular permeability. Induces, through 'trans-signaling' and synergistically with IL1B and TNF, the production of VEGF. Involved in metabolic controls, is discharged into the bloodstream after muscle contraction increasing lipolysis and improving insulin resistance. 'Trans-signaling' in central nervous system also regulates energy and glucose homeostasis. Mediates, through GLP-1, crosstalk between insulin-sensitive tissues, intestinal L cells and pancreatic islets to adapt to changes in insulin demand. Also acts as a myokine. Plays a protective role during liver injury, being required for maintenance of tissue regeneration. Also has a pivotal role in iron metabolism by regulating HAMP/hepcidin expression upon inflammation or bacterial infection. Through activation of IL6ST-YAP-NOTCH pathway, induces inflammation-induced epithelial regeneration. This Homo sapiens (Human) protein is Interleukin-6.